Here is a 581-residue protein sequence, read N- to C-terminus: MAGVSDAAAPGSGGEGRRGGGGSPEQLQQDGCRGEPKTLWGSSELRPPPAGPGQPSPHQRTETLGFYESDRGRKKKRGLSDLSLLRFISAELTRGYFLEHNEAKYTERRERVYTCMRIPKELEKLMFFGIFLCLDAFLYIFTLLPLRVFLAMFRFITLPCYGLRDRRLLQPAQVCDILKGVILVICYFMMHYVDYSMMYHLIRGQSVIKLYIIYNMLEVADRLFSSFGQDILDALYWTATEPKERKRAHIGVIPHFFMAVLYVFLHAILIMVQATTLNVAFNSHNKSLLTIMMSNNFVEIKGSVFKKFEKNNLFQMSNSDIKERFTNYVLLLIVCLRNMEQFSWNPDHLWVLFPDVCMVVASEIAVDIVKHAFITKFNDITADVYSEYRASLAFDLVSSRQKNAYTDYSDSVSRRMGFIPLPLAVLLMRVVTSSIKVQGVLAYVCVVLFYCGLISLKVLNSIVLLGKSCQYVKEAKMEEKLFNPVPSASAGKPAGKPQSMFKSTHGFSTDENGSTSVTNQPVHQKDSPPSLLVTSNSDQFLTTPDGEEKDISQDSSELKHRSSKKDLLEIDRFTICGNRID.

The tract at residues methionine 1–glycine 72 is disordered. Gly residues predominate over residues glycine 11–serine 23. The segment covering arginine 46 to proline 55 has biased composition (pro residues). Transmembrane regions (helical) follow at residues leucine 125–proline 145, isoleucine 182–isoleucine 202, isoleucine 250–isoleucine 270, glycine 417–valine 437, and glycine 439–leucine 459. Positions proline 484–serine 563 are disordered. 2 stretches are compositionally biased toward polar residues: residues methionine 500 to valine 522 and leucine 532 to threonine 542. The span at lysine 549–serine 563 shows a compositional bias: basic and acidic residues.

Belongs to the TAPT1 family.

Its subcellular location is the cytoplasm. It localises to the cytoskeleton. The protein resides in the microtubule organizing center. The protein localises to the centrosome. It is found in the cilium basal body. Its subcellular location is the membrane. Functionally, plays a role in primary cilia formation. May act as a downstream effector of HOXC8 during development. May be involved in cartilage and bone development. May play a role in the differentiation of cranial neural crest cells. This Gallus gallus (Chicken) protein is Transmembrane anterior posterior transformation protein 1 homolog (TAPT1).